A 304-amino-acid polypeptide reads, in one-letter code: E3 ubiquitin-protein ligase CHIP (304 aa).

The span at 1–10 shows a compositional bias: basic and acidic residues; that stretch reads MKGKEEKEGG. The segment at 1–30 is disordered; that stretch reads MKGKEEKEGGARLGTGGGGSPDKSPSAQEL. Residue Lys2 forms a Glycyl lysine isopeptide (Lys-Gly) (interchain with G-Cter in ubiquitin) linkage. The span at 11–20 shows a compositional bias: gly residues; sequence ARLGTGGGGS. Ser20 is subject to Phosphoserine. Lys23 is covalently cross-linked (Glycyl lysine isopeptide (Lys-Gly) (interchain with G-Cter in ubiquitin)). Residues Ser24 and Ser26 each carry the phosphoserine modification. TPR repeat units lie at residues 27–60, 61–94, and 96–128; these read AQELKEQGNRLFVGRKYPEAAACYGRAITRNPLV, AVYYTNRALCYLKMQQPEQALADCRRALELDGQS, and KAHFFLGQCQLEMESYDEAIANLQRAYSLAKEQ. Positions 102–201 are required for interaction with MAPK7; sequence GQCQLEMESY…GHIRAQQACI (100 aa). A required for interaction with and ubiquitination of MYOCD region spans residues 143–197; sequence AKKKRWNSIEERRIHQESELHSYLTRLIAAERERELEECQRNHEGHEDDGHIRAQ. Residues 144-198 form a required for interaction with FOXO1 region; it reads KKKRWNSIEERRIHQESELHSYLTRLIAAERERELEECQRNHEGHEDDGHIRAQQ. The interval 144–304 is required for ubiquitination of FOXO1; that stretch reads KKKRWNSIEE…ISENGWVEDY (161 aa). A Phosphoserine modification is found at Ser150. Glycyl lysine isopeptide (Lys-Gly) (interchain with G-Cter in ubiquitin) cross-links involve residues Lys222 and Lys256. Residues 227–301 form the U-box domain; the sequence is DIPDYLCGKI…DAFISENGWV (75 aa). At Ser274 the chain carries Phosphoserine.

As to quaternary structure, homodimer. Interacts with BAG2, and with the E2 ubiquitin conjugating enzymes UBE2D1, UBE2D2 and UBE2D3. Detected in a ternary complex containing STUB1, HSPA1A and HSPBP1. Part of a complex composed of STUB1/CHIP, VCP/p97, CHRNA3, and UBXN2A that modulates the ubiquitination and endoplasmic reticulum-associated degradation (ERAD) of CHRNA3. Within the complex UBXN2A acts as a scaffold protein required for the interaction of CHRNA3 with VCP/p97, this interaction also inhibits CHRNA3 ubiquitination by STUB1/CHIP and subsequently ERAD. Interacts with MKKS. Interacts with DNAAF4. Interacts (via the U-box domain) with the UBE2V2-UBE2N heterodimer; the complex has a specific 'Lys-63'-linked polyubiquitination activity. Interacts (when monoubiquitinated) with ATXN3. Interacts with UBE2W. Interacts with DNAJB6. Interacts with FLCN and HSP90AA1. Interacts with HSP90. Interacts with UBE2N and UBE2V1. Interacts (via TPR repeats) with HSPA8 (via C-terminus). Interacts (via TPR repeats) with HSPA1A (via C-terminus). Interacts with the non-acetylated form of HSPA1A and HSPA1B. Interacts with SMAD3 and HSP90AB1. Interacts with UBE4B. Interacts with PRMT5. Interacts with MYOCD (via C-terminus). Interacts with FOXO1 (when phosphorylated on 'Ser-253'). Interacts with MAPK7/ERK5; the interaction is enhanced in the presence of IGF1 or MAP2K5 and promotes STUB1/CHIP E3 ligase activity. Interacts with and ubiquitinates ESR1; the interaction is promoted in the absence of estradiol (17-beta-estradiol/E2). Interacts with ESR2. Interacts with and ubiquitinates NFATC3; HSPA1A/HSP70 is required as a co-chaperone. In macrophages, interacts with PAQR3; the interaction promotes PPARG poylubiquitination and STUB1-mediated degradation. Component of the chaperone-assisted selective autophagy (CASA) complex consisting of BAG3, HSPA8/HSC70, HSPB8 and STUB1/CHIP. In terms of processing, auto-ubiquitinated; mediated by UBE2D1 and UBE2D2 and enhanced in the presence of MAP2K5. Monoubiquitinated at Lys-2 following cell stress by UBE2W, promoting the interaction with ATXN3. In terms of tissue distribution, expressed in the brain.

Its subcellular location is the cytoplasm. It is found in the nucleus. The protein localises to the mitochondrion. The catalysed reaction is S-ubiquitinyl-[E2 ubiquitin-conjugating enzyme]-L-cysteine + [acceptor protein]-L-lysine = [E2 ubiquitin-conjugating enzyme]-L-cysteine + N(6)-ubiquitinyl-[acceptor protein]-L-lysine.. The protein operates within protein modification; protein ubiquitination. E3 ubiquitin-protein ligase which targets misfolded chaperone substrates towards proteasomal degradation. Plays a role in the maintenance of mitochondrial morphology and promotes mitophagic removal of dysfunctional mitochondria; thereby acts as a protector against apoptosis in response to cellular stress. Negatively regulates vascular smooth muscle contraction, via degradation of the transcriptional activator MYOCD and subsequent loss of transcription of genes involved in vascular smooth muscle contraction. Promotes survival and proliferation of cardiac smooth muscle cells via ubiquitination and degradation of FOXO1, resulting in subsequent repression of FOXO1-mediated transcription of pro-apoptotic genes. Ubiquitinates ICER-type isoforms of CREM and targets them for proteasomal degradation, thereby acts as a positive effector of MAPK/ERK-mediated inhibition of apoptosis in cardiomyocytes. Inhibits lipopolysaccharide-induced apoptosis and hypertrophy in cardiomyocytes, via ubiquitination and subsequent proteasomal degradation of NFATC3. Collaborates with ATXN3 in the degradation of misfolded chaperone substrates: ATXN3 restricting the length of ubiquitin chain attached to STUB1/CHIP substrates and preventing further chain extension. Ubiquitinates NOS1 in concert with Hsp70 and Hsp40. Modulates the activity of several chaperone complexes, including Hsp70, Hsc70 and Hsp90. Ubiquitinates CHRNA3 targeting it for endoplasmic reticulum-associated degradation in cortical neurons, as part of the STUB1-VCP-UBXN2A complex. Ubiquitinates and promotes ESR1 proteasomal degradation in response to age-related circulating estradiol (17-beta-estradiol/E2) decline, thereby promotes neuronal apoptosis in response to ischemic reperfusion injury. Mediates transfer of non-canonical short ubiquitin chains to HSPA8 that have no effect on HSPA8 degradation. Mediates polyubiquitination of DNA polymerase beta (POLB) at 'Lys-41', 'Lys-61' and 'Lys-81', thereby playing a role in base-excision repair: catalyzes polyubiquitination by amplifying the HUWE1/ARF-BP1-dependent monoubiquitination and leading to POLB-degradation by the proteasome. Mediates polyubiquitination of CYP3A4. Ubiquitinates EPHA2 and may regulate the receptor stability and activity through proteasomal degradation. Acts as a co-chaperone for HSPA1A and HSPA1B chaperone proteins and promotes ubiquitin-mediated protein degradation. Negatively regulates the suppressive function of regulatory T-cells (Treg) during inflammation by mediating the ubiquitination and degradation of FOXP3 in a HSPA1A/B-dependent manner. Catalyzes monoubiquitination of SIRT6, preventing its degradation by the proteasome. Likely mediates polyubiquitination and down-regulates plasma membrane expression of PD-L1/CD274, an immune inhibitory ligand critical for immune tolerance to self and antitumor immunity. Negatively regulates TGF-beta signaling by modulating the basal level of SMAD3 via ubiquitin-mediated degradation. Plays a role in the degradation of TP53. Mediates ubiquitination of RIPK3 leading to its subsequent proteasome-dependent degradation. May regulate myosin assembly in striated muscles together with UBE4B and VCP/p97 by targeting myosin chaperone UNC45B for proteasomal degradation. Ubiquitinates PPARG in macrophages playing a role in M2 macrophages polarization and angiogenesis. In Mus musculus (Mouse), this protein is E3 ubiquitin-protein ligase CHIP.